A 339-amino-acid chain; its full sequence is 4-dimethylallyltryptophan N-methyltransferase easF (339 aa).

The protein belongs to the methyltransferase superfamily. Homodimer.

The catalysed reaction is 4-(3-methylbut-2-enyl)-L-tryptophan + S-adenosyl-L-methionine = 4-(3-methylbut-2-enyl)-L-abrine + S-adenosyl-L-homocysteine + H(+). The protein operates within alkaloid biosynthesis; ergot alkaloid biosynthesis. Functionally, 4-dimethylallyltryptophan N-methyltransferase; part of the gene cluster that mediates the biosynthesis of fumiclavanine C, a fungal ergot alkaloid. DmaW catalyzes the first step of ergot alkaloid biosynthesis by condensing dimethylallyl diphosphate (DMAP) and tryptophan to form 4-dimethylallyl-L-tryptophan. The second step is catalyzed by the methyltransferase easF that methylates 4-dimethylallyl-L-tryptophan in the presence of S-adenosyl-L-methionine, resulting in the formation of 4-dimethylallyl-L-abrine. The catalase easC and the FAD-dependent oxidoreductase easE then transform 4-dimethylallyl-L-abrine to chanoclavine-I which is further oxidized by EasD in the presence of NAD(+), resulting in the formation of chanoclavine-I aldehyde. EasA reduces chanoclavine-I aldehyde to dihydrochanoclavine-I aldehyde that spontaneously dehydrates to form 6,8-dimethyl-6,7-didehydroergoline. EasG then catalyzes the reduction of 6,8-dimethyl-6,7-didehydroergoline to form festuclavine. Hydrolysis of festuclavine by easM then leads to the formation of fumigaclavine B which is in turn acetylated by easN to fumigaclavine A. Finally, easL catalyzes the conversion of fumigaclavine A into fumigaclavine C by attaching a dimethylallyl moiety to C-2 of the indole nucleus. In Aspergillus fumigatus (strain ATCC MYA-4609 / CBS 101355 / FGSC A1100 / Af293) (Neosartorya fumigata), this protein is 4-dimethylallyltryptophan N-methyltransferase easF.